Here is an 881-residue protein sequence, read N- to C-terminus: Putative leucine-rich repeat receptor-like protein kinase At2g19210 (881 aa).

Residues 1-25 (MVHYNFLSLIIFACFFAVFVLLVRA) form the signal peptide. The Extracellular portion of the chain corresponds to 26-518 (QDQSGFVSID…SDEKTKKNVY (493 aa)). N143, N234, N295, N310, N404, N419, N435, N446, and N462 each carry an N-linked (GlcNAc...) asparagine glycan. LRR repeat units lie at residues 438–460 (LLHI…LGNL) and 462–483 (NLTE…KLLE). A helical membrane pass occupies residues 519–539 (IIPLVASVVGVLGLVLAIALF). At 540 to 881 (LLYKKRHRRG…FDSGMFPQAR (342 aa)) the chain is on the cytoplasmic side. In terms of domain architecture, Protein kinase spans 576-850 (NNFERVLGQG…HVVAELKESV (275 aa)). ATP is bound by residues 582–590 (LGQGGFGKV) and K603. A Phosphotyrosine modification is found at Y648. D699 functions as the Proton acceptor in the catalytic mechanism. A phosphothreonine mark is found at T734 and T739. The residue at position 747 (Y747) is a Phosphotyrosine. Positions 851–881 (SRARAGGGSGASSVTDPAMTNFDSGMFPQAR) are disordered.

The protein belongs to the protein kinase superfamily. Ser/Thr protein kinase family.

The protein localises to the cell membrane. The catalysed reaction is L-seryl-[protein] + ATP = O-phospho-L-seryl-[protein] + ADP + H(+). The enzyme catalyses L-threonyl-[protein] + ATP = O-phospho-L-threonyl-[protein] + ADP + H(+). The chain is Putative leucine-rich repeat receptor-like protein kinase At2g19210 from Arabidopsis thaliana (Mouse-ear cress).